Here is a 127-residue protein sequence, read N- to C-terminus: Translation initiation factor 5A (127 aa).

At Lys35 the chain carries Hypusine.

This sequence belongs to the eIF-5A family.

The protein resides in the cytoplasm. Its function is as follows. Functions by promoting the formation of the first peptide bond. In Methanothrix thermoacetophila (strain DSM 6194 / JCM 14653 / NBRC 101360 / PT) (Methanosaeta thermophila), this protein is Translation initiation factor 5A (eIF5A).